A 132-amino-acid polypeptide reads, in one-letter code: Small ribosomal subunit protein uS8 (132 aa).

This sequence belongs to the universal ribosomal protein uS8 family. In terms of assembly, part of the 30S ribosomal subunit. Contacts proteins S5 and S12.

Functionally, one of the primary rRNA binding proteins, it binds directly to 16S rRNA central domain where it helps coordinate assembly of the platform of the 30S subunit. This Corynebacterium efficiens (strain DSM 44549 / YS-314 / AJ 12310 / JCM 11189 / NBRC 100395) protein is Small ribosomal subunit protein uS8.